Consider the following 55-residue polypeptide: Ferredoxin (55 aa).

4Fe-4S ferredoxin-type domains are found at residues 2–27 and 28–55; these read YFIT…SPGD and SVYV…PQQK. [4Fe-4S] cluster contacts are provided by cysteine 8, cysteine 11, cysteine 14, cysteine 18, cysteine 37, cysteine 40, cysteine 43, and cysteine 47.

Requires [4Fe-4S] cluster as cofactor.

Its function is as follows. Ferredoxins are iron-sulfur proteins that transfer electrons in a wide variety of metabolic reactions. The sequence is that of Ferredoxin from Acetivibrio thermocellus (Hungateiclostridium thermocellum).